A 393-amino-acid polypeptide reads, in one-letter code: tRNA(Met) cytidine acetate ligase (393 aa).

Gly81, Asn142, and Arg167 together coordinate ATP.

Belongs to the TmcAL family.

Its subcellular location is the cytoplasm. It catalyses the reaction cytidine(34) in elongator tRNA(Met) + acetate + ATP = N(4)-acetylcytidine(34) in elongator tRNA(Met) + AMP + diphosphate. Its function is as follows. Catalyzes the formation of N(4)-acetylcytidine (ac(4)C) at the wobble position of elongator tRNA(Met), using acetate and ATP as substrates. First activates an acetate ion to form acetyladenylate (Ac-AMP) and then transfers the acetyl group to tRNA to form ac(4)C34. This chain is tRNA(Met) cytidine acetate ligase, found in Bacillus cytotoxicus (strain DSM 22905 / CIP 110041 / 391-98 / NVH 391-98).